Consider the following 427-residue polypeptide: uncharacterized protein (427 aa).

Transmembrane regions (helical) follow at residues 10–30 (LAYL…AGFW), 43–63 (KIIS…SKLA), and 71–91 (IFEI…SFIS). Thr-199 is subject to Phosphothreonine. Ser-234 carries the phosphoserine modification. The next 5 membrane-spanning stretches (helical) occupy residues 253-273 (NLNP…IGPL), 288-308 (FAEA…VVLG), 327-347 (LLIG…LPII), 358-378 (ILDD…PPAI), and 397-417 (ILFW…VSGA).

The protein belongs to the auxin efflux carrier (TC 2.A.69) family.

Its subcellular location is the membrane. This is an uncharacterized protein from Saccharomyces cerevisiae (strain ATCC 204508 / S288c) (Baker's yeast).